The primary structure comprises 985 residues: Bifunctional glutamine synthetase adenylyltransferase/adenylyl-removing enzyme (985 aa).

Positions 1-472 (MTSSAPGNAD…HYARLFEGDP (472 aa)) are adenylyl removase. The tract at residues 477 to 985 (SLPPVNYGAG…RRVFTSLLEE (509 aa)) is adenylyl transferase.

The protein belongs to the GlnE family. Mg(2+) serves as cofactor.

It catalyses the reaction [glutamine synthetase]-O(4)-(5'-adenylyl)-L-tyrosine + phosphate = [glutamine synthetase]-L-tyrosine + ADP. The catalysed reaction is [glutamine synthetase]-L-tyrosine + ATP = [glutamine synthetase]-O(4)-(5'-adenylyl)-L-tyrosine + diphosphate. In terms of biological role, involved in the regulation of glutamine synthetase GlnA, a key enzyme in the process to assimilate ammonia. When cellular nitrogen levels are high, the C-terminal adenylyl transferase (AT) inactivates GlnA by covalent transfer of an adenylyl group from ATP to specific tyrosine residue of GlnA, thus reducing its activity. Conversely, when nitrogen levels are low, the N-terminal adenylyl removase (AR) activates GlnA by removing the adenylyl group by phosphorolysis, increasing its activity. The regulatory region of GlnE binds the signal transduction protein PII (GlnB) which indicates the nitrogen status of the cell. This is Bifunctional glutamine synthetase adenylyltransferase/adenylyl-removing enzyme from Bradyrhizobium sp. (strain BTAi1 / ATCC BAA-1182).